Here is a 1135-residue protein sequence, read N- to C-terminus: Envelopment polyprotein (1135 aa).

A signal peptide spans 1–18 (MGIWKWLVMASLVWPVLT). Topologically, residues 19–485 (LRNVYDMKIE…VPGFHGWATA (467 aa)) are lumenal. 11 cysteine pairs are disulfide-bonded: C29-C151, C63-C157, C109-C128, C133-C138, C175-C185, C210-C247, C234-C351, C376-C435, C380-C389, C405-C424, and C452-C475. A glycan (N-linked (GlcNAc...) asparagine; by host) is linked at N134. 2 N-linked (GlcNAc...) asparagine; by host glycosylation sites follow: N235 and N347. N-linked (GlcNAc...) asparagine; by host glycosylation is present at N399. The helical transmembrane segment at 486 to 506 (ALLVTFCFGWVLIPAITFIIL) threads the bilayer. Topologically, residues 507–627 (TVLKFIANIF…LNLFRYKSRC (121 aa)) are cytoplasmic. The segment at 516–533 (FHTSNQENRLKSVLRKIK) is binding to the ribonucleoprotein. CCHC-type zinc fingers lie at residues 545–565 (CDVC…GVSC) and 570–591 (CPYC…YKVC). Binding to the ribonucleoprotein stretches follow at residues 588 to 605 (YKVC…KKTV), 592 to 603 (QVTHRFRDDLKK), and 611 to 625 (TPGC…RYKS). An ITAM domain is found at 611–634 (TPGCYRTLNLFRYKSRCYIFTMWI). A YxxL motif is present at residues 615 to 618 (YRTL). Residues 628–648 (YIFTMWIFLLVLESILWAASA) form a helical membrane-spanning segment. Residues 649–1105 (SETPLTPVWN…EWISGIFSGN (457 aa)) lie on the Lumenal side of the membrane. Disulfide bonds link C735–C770, C739–C777, C751–C885, C765–C896, C780–C904, C806–C815, C823–C832, and C863–C867. Positions 757–777 (YQYETSWGCNPSDCPGVGTGC) are fusion loop. Residue N928 is glycosylated (N-linked (GlcNAc...) asparagine; by host). 5 disulfide bridges follow: C970-C1000, C993-C1045, C1010-C1015, C1046-C1051, and C1085-C1089. The chain crosses the membrane as a helical span at residues 1106–1126 (WIVLIVLCVFLLFSLVLLSIL). The segment at 1122 to 1135 (LLSILCPVRKHKKS) is binding to the ribonucleoprotein. The Cytoplasmic segment spans residues 1127 to 1135 (CPVRKHKKS).

The protein belongs to the hantavirus envelope glycoprotein family. As to quaternary structure, homodimer. Homotetramer; forms heterotetrameric Gn-Gc spikes in the pre-fusion conformation. Interacts (via C-terminus) with the nucleoprotein. Interacts with host TUFM; this interaction contributes to the virus-induced degradation of mitochondria by autophagy, which leads to degradation of host MAVS and inhibition of type I interferon (IFN) responses. Interacts with host MAP1LC3B; this interaction contributes to the virus-induced degradation of mitochondria by autophagy, which leads to degradation of host MAVS and inhibition of type I interferon (IFN) responses. In terms of assembly, homotetramer; forms heterotetrameric Gn-Gc spikes in the pre-fusion conformation. Homotrimer; forms homotrimer in the post-fusion conformation at acidic pH. Interacts (via C-terminus) with the nucleoprotein. Post-translationally, specific enzymatic cleavage in vivo yield the mature proteins Glycoprotein N and Glycoprotein C.

The protein localises to the virion membrane. Its subcellular location is the host cell surface. It is found in the host Golgi apparatus membrane. The protein resides in the host endoplasmic reticulum membrane. It localises to the host mitochondrion. Functionally, forms homotetramers with glycoprotein C at the surface of the virion. Attaches the virion to host cell receptors including integrin ITGAV/ITGB3. This attachment induces virion internalization predominantly through clathrin-dependent endocytosis. May also bind to host C1QBP for virus entry into the host cell. Mediates the assembly and budding of infectious virus particles through its interaction with the nucleocapsid protein and the viral genome. May dysregulate normal immune and endothelial cell responses through an ITAM motif. Translocates to mitochondria, binds to host TUFM and recruits MAP1LC3B. These interactions induce mitochondrial autophagy and therefore destruction of host MAVS leading to inhibition of type I interferon (IFN) responses. Concomitant breakdown of glycoprotein N is apparently prevented by the nucleoprotein that may inhibit Gn-stimulated autophagosome-lysosome fusion. Interacts with the viral genomic RNA. Homodimer. Homotetramer; forms heterotetrameric Gn-Gc spikes in the pre-fusion conformation. Attaches the virion to host cell receptors including integrin ITGAV/ITGB3. This attachment induces virion internalization predominantly through clathrin-dependent endocytosis. May also bind to host C1QBP for virus entry into the host cell. Class II fusion protein that promotes fusion of viral membrane with host endosomal membrane after endocytosis of the virion. The sequence is that of Envelopment polyprotein (GP) from Apodemus agrarius (Eurasian field mouse).